Consider the following 340-residue polypeptide: Organic solute transporter subunit alpha (340 aa).

Residues 1–48 (MEPGRTQIKLDPRYTADLLEVLKTNYGIPSACFSQPPTAAQLLRALGP) are Extracellular-facing. A helical membrane pass occupies residues 49-69 (VELALTSILTLLALGSIAIFL). Residues 70-87 (EDAVYLYKNTLCPIKRRT) lie on the Cytoplasmic side of the membrane. The chain crosses the membrane as a helical span at residues 88 to 108 (LLWKSSAPTVVSVLCCFGLWI). The Extracellular portion of the chain corresponds to 109–118 (PRSLVLVEMT). The helical transmembrane segment at 119–139 (ITSFYAVCFYLLMLVMVEGFG) threads the bilayer. Residues 140–181 (GKEAVLRTLRDTPMMVHTGPCCCCCPCCPRLLLTRKKLQLLM) lie on the Cytoplasmic side of the membrane. A helical membrane pass occupies residues 182 to 202 (LGPFQYAFLKITLTLVGLFLV). Residues 203–218 (PDGIYDPADISEGSTA) lie on the Extracellular side of the membrane. Residues 219–239 (LWINTFLGVSTLLALWTLGII) form a helical membrane-spanning segment. Topologically, residues 240–255 (SRQARLHLGEQNMGAK) are cytoplasmic. The helical transmembrane segment at 256 to 276 (FALFQVLLILTALQPSIFSVL) threads the bilayer. Over 277–294 (ANGGQIACSPPYSSKTRS) the chain is Extracellular. A helical membrane pass occupies residues 295 to 317 (QVMNCHLLILETFLMTVLTRMYY). Over 318-340 (RRKDHKVGYETFSSPDLDLNLKA) the chain is Cytoplasmic. At S330 the chain carries Phosphoserine.

Belongs to the OST-alpha family. As to quaternary structure, interacts with SLC51B. The Ost-alpha/Ost-beta complex is a heterodimer composed of alpha (SLC51A) and beta (SLC51B) subunit. Widely expressed with a high expression in ileum. Expressed in testis, colon, liver, small intestine, kidney, ovary and adrenal gland; and at low levels in heart, lung, brain, pituitary, thyroid gland, uterus, prostate, mammary gland and fat.

It localises to the cell membrane. Its subcellular location is the endoplasmic reticulum membrane. The catalysed reaction is taurocholate(out) = taurocholate(in). It catalyses the reaction estrone 3-sulfate(out) = estrone 3-sulfate(in). It carries out the reaction dehydroepiandrosterone 3-sulfate(out) = dehydroepiandrosterone 3-sulfate(in). The enzyme catalyses tauroursodeoxycholate(out) = tauroursodeoxycholate(in). The catalysed reaction is glycoursodeoxycholate(out) = glycoursodeoxycholate(in). It catalyses the reaction glycocholate(out) = glycocholate(in). It carries out the reaction taurochenodeoxycholate(out) = taurochenodeoxycholate(in). The enzyme catalyses glycochenodeoxycholate(out) = glycochenodeoxycholate(in). The catalysed reaction is taurodeoxycholate(out) = taurodeoxycholate(in). It catalyses the reaction glycodeoxycholate(out) = glycodeoxycholate(in). It carries out the reaction prostaglandin E2(out) = prostaglandin E2(in). In terms of biological role, essential component of the Ost-alpha/Ost-beta complex, a heterodimer that acts as the intestinal basolateral transporter responsible for bile acid export from enterocytes into portal blood. Efficiently transports the major species of bile acids (taurocholate). Taurine conjugates are transported more efficiently across the basolateral membrane than glycine-conjugated bile acids. Can also transport steroids such as estrone 3-sulfate and dehydroepiandrosterone 3-sulfate, therefore playing a role in the enterohepatic circulation of sterols. Able to transport eicosanoids such as prostaglandin E2. The polypeptide is Organic solute transporter subunit alpha (SLC51A) (Homo sapiens (Human)).